The chain runs to 161 residues: Nucleotide-binding protein Tcr_1902 (161 aa).

This sequence belongs to the YajQ family.

Functionally, nucleotide-binding protein. The chain is Nucleotide-binding protein Tcr_1902 from Hydrogenovibrio crunogenus (strain DSM 25203 / XCL-2) (Thiomicrospira crunogena).